Reading from the N-terminus, the 339-residue chain is MRVYYDRDADLARILDKKIAIVGYGSQGHAHALNLRDSGATNVAVALRAGSPTAKKAQGEGLKVMTVAEAAAWADLLMILAPDEHQAAIYKNDIAPNIRDGAALLFAHGLNVHFGLIEPKDTIDVLMVAPKGPGHTVRGEYQKGGGVPCLIAVHHNATGNALDLGLAYASAIGGGRSGIIETNFREECETDLFGEQAVLCGGTVDLIRCGFEVLVEAGYAPEMAYFECLHELKLIVDLIYEGGIANMNYSISNTAEYGEYVTGPRIVTAETKAEMKRVLEDIQSGKFVRDFMLENAVGQPSFKATRRRASEHQIEEVGARLRGMMPWIAKNKLVDVTKN.

Residues 1–182 enclose the KARI N-terminal Rossmann domain; sequence MRVYYDRDAD…GGGRSGIIET (182 aa). NADP(+)-binding positions include 24–27, Arg48, Ser51, Thr53, and 83–86; these read YGSQ and DEHQ. The active site involves His108. Gly134 is an NADP(+) binding site. Positions 183–328 constitute a KARI C-terminal knotted domain; it reads NFREECETDL…ARLRGMMPWI (146 aa). 4 residues coordinate Mg(2+): Asp191, Glu195, Glu227, and Glu231. Ser252 serves as a coordination point for substrate.

It belongs to the ketol-acid reductoisomerase family. It depends on Mg(2+) as a cofactor.

It carries out the reaction (2R)-2,3-dihydroxy-3-methylbutanoate + NADP(+) = (2S)-2-acetolactate + NADPH + H(+). The catalysed reaction is (2R,3R)-2,3-dihydroxy-3-methylpentanoate + NADP(+) = (S)-2-ethyl-2-hydroxy-3-oxobutanoate + NADPH + H(+). It functions in the pathway amino-acid biosynthesis; L-isoleucine biosynthesis; L-isoleucine from 2-oxobutanoate: step 2/4. The protein operates within amino-acid biosynthesis; L-valine biosynthesis; L-valine from pyruvate: step 2/4. Involved in the biosynthesis of branched-chain amino acids (BCAA). Catalyzes an alkyl-migration followed by a ketol-acid reduction of (S)-2-acetolactate (S2AL) to yield (R)-2,3-dihydroxy-isovalerate. In the isomerase reaction, S2AL is rearranged via a Mg-dependent methyl migration to produce 3-hydroxy-3-methyl-2-ketobutyrate (HMKB). In the reductase reaction, this 2-ketoacid undergoes a metal-dependent reduction by NADPH to yield (R)-2,3-dihydroxy-isovalerate. This chain is Ketol-acid reductoisomerase (NADP(+)), found in Caulobacter sp. (strain K31).